The chain runs to 166 residues: Signal peptidase complex catalytic subunit SEC11 (166 aa).

Residues 1-9 (MNIRQQLTQ) are Cytoplasmic-facing. The helical; Signal-anchor for type II membrane protein transmembrane segment at 10 to 30 (FLSLAYVFTSAFVIWKSLGII) threads the bilayer. Residues 31 to 166 (TNSHSPIVVV…MCISTLLTNE (136 aa)) lie on the Lumenal side of the membrane. Catalysis depends on charge relay system residues Ser-44, His-83, and Asp-108. Residues 152–163 (GMLGLMCISTLL) form a C-terminal short (CTS) helix region.

This sequence belongs to the peptidase S26B family. In terms of assembly, component of the signal peptidase complex (SPC) composed of a catalytic subunit SEC11 and three accessory subunits SPC1, SPC2 and SPC3. The complex induces a local thinning of the ER membrane which is used to measure the length of the signal peptide (SP) h-region of protein substrates. This ensures the selectivity of the complex towards h-regions shorter than 18-20 amino acids. SPC associates with the translocon complex.

The protein resides in the endoplasmic reticulum membrane. It carries out the reaction Cleavage of hydrophobic, N-terminal signal or leader sequences from secreted and periplasmic proteins.. Functionally, catalytic component of the signal peptidase complex (SPC) which catalyzes the cleavage of N-terminal signal sequences from nascent proteins as they are translocated into the lumen of the endoplasmic reticulum. Specifically cleaves N-terminal signal peptides that contain a hydrophobic alpha-helix (h-region) shorter than 18-20 amino acids. The protein is Signal peptidase complex catalytic subunit SEC11 (SEC11) of Scheffersomyces stipitis (strain ATCC 58785 / CBS 6054 / NBRC 10063 / NRRL Y-11545) (Yeast).